Consider the following 498-residue polypeptide: Glycerol kinase (498 aa).

Threonine 12 provides a ligand contact to ADP. Residues threonine 12, threonine 13, and serine 14 each contribute to the ATP site. Threonine 12 is a sn-glycerol 3-phosphate binding site. An ADP-binding site is contributed by arginine 16. Positions 82, 83, 134, and 243 each coordinate sn-glycerol 3-phosphate. Positions 82, 83, 134, 243, and 244 each coordinate glycerol. ADP contacts are provided by threonine 265 and glycine 308. Threonine 265, glycine 308, glutamine 312, and glycine 412 together coordinate ATP. Glycine 412 serves as a coordination point for ADP.

This sequence belongs to the FGGY kinase family.

The enzyme catalyses glycerol + ATP = sn-glycerol 3-phosphate + ADP + H(+). Its pathway is polyol metabolism; glycerol degradation via glycerol kinase pathway; sn-glycerol 3-phosphate from glycerol: step 1/1. Its activity is regulated as follows. Inhibited by fructose 1,6-bisphosphate (FBP). Functionally, key enzyme in the regulation of glycerol uptake and metabolism. Catalyzes the phosphorylation of glycerol to yield sn-glycerol 3-phosphate. In Rhizobium rhizogenes (strain K84 / ATCC BAA-868) (Agrobacterium radiobacter), this protein is Glycerol kinase.